Here is a 300-residue protein sequence, read N- to C-terminus: Cation-efflux pump FieF (300 aa).

4 consecutive transmembrane segments (helical) span residues 12–32 (AAIAATAMASLLLLIKIFAWW), 39–59 (ILAALVDSLVDIGASLTNLLV), 82–102 (AALAQSMFISGSALFLFLTGI), and 114–134 (PGVGVIVTIVALICTIILVSF). Zn(2+)-binding residues include D45 and D49. Zn(2+) is bound by residues H153 and D157. 2 helical membrane-spanning segments follow: residues 156–176 (SDVMMNGAILLALGLSWYGWH) and 178–198 (ADALFALGIGIYILYSALRMG).

The protein belongs to the cation diffusion facilitator (CDF) transporter (TC 2.A.4) family. FieF subfamily. Homodimer.

Its subcellular location is the cell inner membrane. It carries out the reaction Zn(2+)(in) + H(+)(out) = Zn(2+)(out) + H(+)(in). The enzyme catalyses Cd(2+)(in) + H(+)(out) = Cd(2+)(out) + H(+)(in). It catalyses the reaction Fe(2+)(in) + H(+)(out) = Fe(2+)(out) + H(+)(in). Functionally, divalent metal cation transporter which exports Zn(2+), Cd(2+) and possibly Fe(2+). May be involved in zinc and iron detoxification by efflux. This Escherichia coli O127:H6 (strain E2348/69 / EPEC) protein is Cation-efflux pump FieF.